The following is a 233-amino-acid chain: Phosphoglycolate phosphatase (233 aa).

Residue Asp9 is the Nucleophile of the active site. The Mg(2+) site is built by Asp9 and Asp11. Lys154 contributes to the substrate binding site. Residues Asp177 and Asp181 each contribute to the Mg(2+) site.

Belongs to the archaeal SPP-like hydrolase family. The cofactor is Mg(2+).

The enzyme catalyses 2-phosphoglycolate + H2O = glycolate + phosphate. Catalyzes the dephosphorylation of 2-phosphoglycolate. The sequence is that of Phosphoglycolate phosphatase from Pyrococcus abyssi (strain GE5 / Orsay).